A 100-amino-acid polypeptide reads, in one-letter code: Urease subunit gamma (100 aa).

Belongs to the urease gamma subunit family. Heterotrimer of UreA (gamma), UreB (beta) and UreC (alpha) subunits. Three heterotrimers associate to form the active enzyme.

It localises to the cytoplasm. The enzyme catalyses urea + 2 H2O + H(+) = hydrogencarbonate + 2 NH4(+). The protein operates within nitrogen metabolism; urea degradation; CO(2) and NH(3) from urea (urease route): step 1/1. The sequence is that of Urease subunit gamma from Methylobacillus flagellatus (strain ATCC 51484 / DSM 6875 / VKM B-1610 / KT).